We begin with the raw amino-acid sequence, 203 residues long: Histidine biosynthesis bifunctional protein HisIE (203 aa).

A phosphoribosyl-AMP cyclohydrolase region spans residues 1 to 114 (MLTEQQRREL…FGDASHQWLF (114 aa)). The interval 115–203 (LYQLEQLLAE…VIDNLRKRHQ (89 aa)) is phosphoribosyl-ATP pyrophosphohydrolase.

This sequence in the N-terminal section; belongs to the PRA-CH family. It in the C-terminal section; belongs to the PRA-PH family.

It localises to the cytoplasm. The enzyme catalyses 1-(5-phospho-beta-D-ribosyl)-ATP + H2O = 1-(5-phospho-beta-D-ribosyl)-5'-AMP + diphosphate + H(+). It carries out the reaction 1-(5-phospho-beta-D-ribosyl)-5'-AMP + H2O = 1-(5-phospho-beta-D-ribosyl)-5-[(5-phospho-beta-D-ribosylamino)methylideneamino]imidazole-4-carboxamide. Its pathway is amino-acid biosynthesis; L-histidine biosynthesis; L-histidine from 5-phospho-alpha-D-ribose 1-diphosphate: step 2/9. The protein operates within amino-acid biosynthesis; L-histidine biosynthesis; L-histidine from 5-phospho-alpha-D-ribose 1-diphosphate: step 3/9. This is Histidine biosynthesis bifunctional protein HisIE (hisI) from Salmonella typhimurium (strain LT2 / SGSC1412 / ATCC 700720).